The chain runs to 119 residues: Type II secretion system protein I (119 aa).

Positions 1 to 5 (MNARG) are cleaved as a propeptide — leader sequence. Met6 is subject to N-methylmethionine. The chain crosses the membrane as a helical span at residues 6–26 (MTLLEVMVALAVFAIAGLAVM).

It belongs to the GSP I family. Type II secretion is composed of four main components: the outer membrane complex, the inner membrane complex, the cytoplasmic secretion ATPase and the periplasm-spanning pseudopilus. Interacts with core component ExeG. Cleaved by prepilin peptidase. Post-translationally, methylated by prepilin peptidase at the amino group of the N-terminal methionine once the leader sequence is cleaved by prepilin peptidase.

The protein resides in the cell inner membrane. In terms of biological role, component of the type II secretion system required for the energy-dependent secretion of extracellular factors such as proteases and toxins from the periplasm. Part of the pseudopilus tip complex that is critical for the recognition and binding of secretion substrates. The protein is Type II secretion system protein I (exeI) of Aeromonas hydrophila.